The following is a 122-amino-acid chain: Large ribosomal subunit protein uL14 (122 aa).

The protein belongs to the universal ribosomal protein uL14 family. In terms of assembly, part of the 50S ribosomal subunit. Forms a cluster with proteins L3 and L19. In the 70S ribosome, L14 and L19 interact and together make contacts with the 16S rRNA in bridges B5 and B8.

In terms of biological role, binds to 23S rRNA. Forms part of two intersubunit bridges in the 70S ribosome. The sequence is that of Large ribosomal subunit protein uL14 from Cyanothece sp. (strain PCC 7425 / ATCC 29141).